The sequence spans 87 residues: uncharacterized protein (87 aa).

The 84-residue stretch at 4–87 (SKIIILNNNK…TISGSILIKI (84 aa)) folds into the 2Fe-2S ferredoxin-type domain. Residues cysteine 39, cysteine 44, cysteine 47, and cysteine 75 each coordinate [2Fe-2S] cluster.

[2Fe-2S] cluster serves as cofactor.

This is an uncharacterized protein from Buchnera aphidicola subsp. Baizongia pistaciae (strain Bp).